Here is a 361-residue protein sequence, read N- to C-terminus: Isopentenyl-diphosphate delta-isomerase (361 aa).

12 to 13 (RK) contacts substrate. FMN is bound by residues serine 70, 71-73 (SMT), serine 101, and asparagine 130. Residue 101–103 (SMR) coordinates substrate. Glutamine 165 is a substrate binding site. A Mg(2+)-binding site is contributed by glutamate 166. Residues lysine 197 and 310–311 (AG) each bind FMN.

It belongs to the IPP isomerase type 2 family. Homooctamer. Dimer of tetramers. It depends on FMN as a cofactor. NADPH is required as a cofactor. The cofactor is Mg(2+).

Its subcellular location is the cytoplasm. The catalysed reaction is isopentenyl diphosphate = dimethylallyl diphosphate. Involved in the biosynthesis of isoprenoids. Catalyzes the 1,3-allylic rearrangement of the homoallylic substrate isopentenyl (IPP) to its allylic isomer, dimethylallyl diphosphate (DMAPP). This chain is Isopentenyl-diphosphate delta-isomerase, found in Chlorobium luteolum (strain DSM 273 / BCRC 81028 / 2530) (Pelodictyon luteolum).